The following is a 103-amino-acid chain: Large ribosomal subunit protein bL21 (103 aa).

The protein belongs to the bacterial ribosomal protein bL21 family. Part of the 50S ribosomal subunit. Contacts protein L20.

Functionally, this protein binds to 23S rRNA in the presence of protein L20. The sequence is that of Large ribosomal subunit protein bL21 from Burkholderia ambifaria (strain MC40-6).